A 668-amino-acid polypeptide reads, in one-letter code: tRNA 5-methylaminomethyl-2-thiouridine biosynthesis bifunctional protein MnmC (668 aa).

Positions 1-245 (MKHYSIQPAN…KREMLCGVME (245 aa)) are tRNA (mnm(5)s(2)U34)-methyltransferase. The segment at 270 to 668 (IGGGIASALL…LLKGKAVKAG (399 aa)) is FAD-dependent cmnm(5)s(2)U34 oxidoreductase.

The protein in the N-terminal section; belongs to the methyltransferase superfamily. tRNA (mnm(5)s(2)U34)-methyltransferase family. In the C-terminal section; belongs to the DAO family. It depends on FAD as a cofactor.

It is found in the cytoplasm. It catalyses the reaction 5-aminomethyl-2-thiouridine(34) in tRNA + S-adenosyl-L-methionine = 5-methylaminomethyl-2-thiouridine(34) in tRNA + S-adenosyl-L-homocysteine + H(+). In terms of biological role, catalyzes the last two steps in the biosynthesis of 5-methylaminomethyl-2-thiouridine (mnm(5)s(2)U) at the wobble position (U34) in tRNA. Catalyzes the FAD-dependent demodification of cmnm(5)s(2)U34 to nm(5)s(2)U34, followed by the transfer of a methyl group from S-adenosyl-L-methionine to nm(5)s(2)U34, to form mnm(5)s(2)U34. This Shigella flexneri serotype 5b (strain 8401) protein is tRNA 5-methylaminomethyl-2-thiouridine biosynthesis bifunctional protein MnmC.